The primary structure comprises 1021 residues: Ankyrin repeat- and BTB/POZ domain-containing protein 3-A (1021 aa).

Residues Met-160–Leu-180 traverse the membrane as a helical segment. ANK repeat units follow at residues Gln-515–Ser-544, Arg-561–Gly-590, Tyr-599–Ile-628, and Gly-642–Gly-671. A BTB domain is found at Ser-836–His-902.

The protein resides in the membrane. The sequence is that of Ankyrin repeat- and BTB/POZ domain-containing protein 3-A (abtb3a) from Danio rerio (Zebrafish).